Reading from the N-terminus, the 984-residue chain is Probable translation initiation factor IF-2 (984 aa).

The region spanning 94 to 215 is the DOD-type homing endonuclease domain; the sequence is VNGWYSVTVT…LPLLLLRFGI (122 aa). In terms of domain architecture, tr-type G spans 391–608; the sequence is TTETHNFVAN…LIAGLSQKYL (218 aa). GTP-binding positions include 464–468 and 518–521; these read DTPGH and NKID.

It belongs to the TRAFAC class translation factor GTPase superfamily. Classic translation factor GTPase family. IF-2 subfamily. This protein undergoes a protein self splicing that involves a post-translational excision of the intervening region (intein) followed by peptide ligation.

Its function is as follows. Function in general translation initiation by promoting the binding of the formylmethionine-tRNA to ribosomes. Seems to function along with eIF-2. This chain is Probable translation initiation factor IF-2 (infB), found in Pyrococcus furiosus (strain ATCC 43587 / DSM 3638 / JCM 8422 / Vc1).